The following is a 382-amino-acid chain: Mannan endo-1,4-beta-mannosidase (382 aa).

A signal peptide spans 1 to 19 (MVKLFSFLLLVWVASPAFS). Substrate contacts are provided by residues Trp-83, Asn-144, 147 to 151 (WDESK), and Asn-180. The active-site Proton donor/acceptor is the Glu-181. Substrate is bound by residues Gln-187, Gln-204, Trp-208, Trp-243, Tyr-282, and His-284. Cysteines 195 and 262 form a disulfide. Glu-312 acts as the Nucleophile in catalysis. Cys-317 and Cys-349 form a disulfide bridge. Substrate contacts are provided by Trp-341 and Asp-348. An involved in stabilization of the transition state region spans residues 346-350 (GGDCS).

The protein belongs to the glycosyl hydrolase 5 (cellulase A) family. As to quaternary structure, monomer.

It is found in the secreted. The enzyme catalyses Random hydrolysis of (1-&gt;4)-beta-D-mannosidic linkages in mannans, galactomannans and glucomannans.. With respect to regulation, activated particularly by Ca(2+) and Zn(2+), and to a lesser extent by Na(+), K(+), Mg(2+) and Cu(2+). Activation effect of the divalent metal ions Ca(2+), Zn(2+), Mg(2+) and Cu(2+) is reduced significantly by the addition of EDTA. Strongly inhibited by Mn(2+), Hg(2+) and Ag(+). Functionally, hydrolyzes 1,4-beta linked polysaccharide backbones of mannans. Has high activity toward locust bean gum. Also active toward konjac and beta-1,4-mannan. Hydrolyzes mannotetraose (M4) and mannopentaose (M5) to mannobiose (M2) and mannotriose (M3) with a little production of mannose (M1). Hydrolyzes beta-1,4-mannan to M2, M3 and M4. Hardly hydrolyzes M2 and M3. Does not hydrolyze p-nitrophenyl-beta-D-mannopyranoside, gua-gum, carboxymethyl cellulose, soluble starch or laminarin. The protein is Mannan endo-1,4-beta-mannosidase of Cryptopygus antarcticus (Antarctic springtail).